The sequence spans 81 residues: uncharacterized protein (81 aa).

This is an uncharacterized protein from Schizosaccharomyces pombe (strain 972 / ATCC 24843) (Fission yeast).